The chain runs to 149 residues: Transcriptional repressor NrdR (149 aa).

A zinc finger spans residues 3-34 (CPFCSHPETQVVETRVAEDGDFVRRRRQCGAC). The region spanning 49–139 (PNVVKKDGRR…VYRNFEDIDE (91 aa)) is the ATP-cone domain.

Belongs to the NrdR family. Zn(2+) serves as cofactor.

In terms of biological role, negatively regulates transcription of bacterial ribonucleotide reductase nrd genes and operons by binding to NrdR-boxes. The polypeptide is Transcriptional repressor NrdR (Paracidovorax citrulli (strain AAC00-1) (Acidovorax citrulli)).